Here is a 449-residue protein sequence, read N- to C-terminus: Tubulin alpha-B chain (449 aa).

8 residues coordinate GTP: Gln11, Glu71, Ser140, Gly144, Thr145, Thr179, Asn206, and Asn228. Mg(2+) is bound at residue Glu71. Glu254 is an active-site residue.

Belongs to the tubulin family. As to quaternary structure, dimer of alpha and beta chains. A typical microtubule is a hollow water-filled tube with an outer diameter of 25 nm and an inner diameter of 15 nM. Alpha-beta heterodimers associate head-to-tail to form protofilaments running lengthwise along the microtubule wall with the beta-tubulin subunit facing the microtubule plus end conferring a structural polarity. Microtubules usually have 13 protofilaments but different protofilament numbers can be found in some organisms and specialized cells. Mg(2+) serves as cofactor.

It is found in the cytoplasm. It localises to the cytoskeleton. The catalysed reaction is GTP + H2O = GDP + phosphate + H(+). Tubulin is the major constituent of microtubules, a cylinder consisting of laterally associated linear protofilaments composed of alpha- and beta-tubulin heterodimers. Microtubules grow by the addition of GTP-tubulin dimers to the microtubule end, where a stabilizing cap forms. Below the cap, tubulin dimers are in GDP-bound state, owing to GTPase activity of alpha-tubulin. The polypeptide is Tubulin alpha-B chain (tba-2) (Neurospora crassa (strain ATCC 24698 / 74-OR23-1A / CBS 708.71 / DSM 1257 / FGSC 987)).